Consider the following 299-residue polypeptide: Delta-9 desaturase-like 5 protein (299 aa).

Transmembrane regions (helical) follow at residues 31–51 and 55–75; these read ADII…LAPF and WEAL…ITFS. Positions 77-82 match the Histidine box-1 motif; the sequence is HRNLAH. The Histidine box-2 signature appears at 114-118; that stretch reads HRFHH. 2 consecutive transmembrane segments (helical) span residues 174–194 and 199–219; these read IGFH…LPYL and GVGG…CHIW. Positions 246–250 match the Histidine box-3 motif; it reads HNNHH.

Belongs to the fatty acid desaturase type 1 family. Fe cation serves as cofactor.

The protein resides in the endoplasmic reticulum membrane. It functions in the pathway lipid metabolism; polyunsaturated fatty acid biosynthesis. The protein is Delta-9 desaturase-like 5 protein of Arabidopsis thaliana (Mouse-ear cress).